The primary structure comprises 352 residues: NADH-ubiquinone oxidoreductase chain 2 (352 aa).

12 helical membrane-spanning segments follow: residues 4 to 24 (IVST…VSSE), 26 to 46 (WFII…ILCS), 67 to 87 (AALL…WSIL), 96 to 116 (ICLS…FWFP), 124 to 144 (FFQG…LMFY), 148 to 168 (LGFS…GGWG), 177 to 197 (KILA…SAYS), 198 to 218 (FNAA…LFLL), 241 to 261 (VALV…TGFI), 264 to 284 (FTSL…IMII), 290 to 310 (YFFY…QHII), and 332 to 352 (SVST…YIIT).

Belongs to the complex I subunit 2 family.

It is found in the mitochondrion inner membrane. The enzyme catalyses a ubiquinone + NADH + 5 H(+)(in) = a ubiquinol + NAD(+) + 4 H(+)(out). Functionally, core subunit of the mitochondrial membrane respiratory chain NADH dehydrogenase (Complex I) that is believed to belong to the minimal assembly required for catalysis. Complex I functions in the transfer of electrons from NADH to the respiratory chain. The immediate electron acceptor for the enzyme is believed to be ubiquinone. The polypeptide is NADH-ubiquinone oxidoreductase chain 2 (ND2) (Strongylocentrotus purpuratus (Purple sea urchin)).